The primary structure comprises 261 residues: MENEESGKSFVVQWNNSEGGLSEGPLSVLWSLIESYKVDIFDVSLSRITRDFLSFLRISETLSLELSAEYALMAANLIYLKSKALLPDPGFEEEDYEPPLPPELVEKLLEHKKFQLTAKKLSEMDQTQTGVFRRESNVTLDEEDNWLDVSLLDLISAFHEILESQSVEAEIPTLLTAPHRFTVEEKMEKILFTLREKKEISFPELFEREKPEKAEIVATFLALLELSKQRILRAKQHKLFGEIRLFLVEGHWNGTEQQSKD.

This sequence belongs to the ScpA family. In terms of assembly, component of a cohesin-like complex composed of ScpA, ScpB and the Smc homodimer, in which ScpA and ScpB bind to the head domain of Smc. The presence of the three proteins is required for the association of the complex with DNA.

It is found in the cytoplasm. Functionally, participates in chromosomal partition during cell division. May act via the formation of a condensin-like complex containing Smc and ScpB that pull DNA away from mid-cell into both cell halves. The protein is Segregation and condensation protein A of Leptospira interrogans serogroup Icterohaemorrhagiae serovar copenhageni (strain Fiocruz L1-130).